Reading from the N-terminus, the 442-residue chain is MSKKEKPHMNLIVIGHVDHGKSTLVGHLLYELGFVDEKTLKMLEEEAKKRGKESFKYAWLLDKLKEERERGVTIDLTFMKFETPKYYFTIIDAPGHRDFIKNMITGASQADAAILVVSARPGEFEAGMSAEGQTREHILLAKTMGIDQIIVAVNKMDATEPPWSEKRYKQIVETLKKFMKGLGFKVDEIPFVPVSAWTGDNIIKRSENMPWYKGPTLVEALDNLKPPSVEKWAKLPLRIPIQDVYSITGVGTVPVGRVETGVLKVGDKVVFMPPGVGGEVRSIEMHHEKIEQAMPGDNIGFNVRGVSKNDIKRGDVAGHPENPPTVADQFTARVFVIWHPSAIAVGYTPVIHAHTASVASRIIEIKQKIDPRTGKVIEENPSFLKPGDAAVVVFKPLKPMVIEKFQEFQPLGRFAMRDMGKTVGIGIVTDVKPAKVEIKMKK.

One can recognise a tr-type G domain in the interval 6 to 229 (KPHMNLIVIG…ALDNLKPPSV (224 aa)). Residues 15–22 (GHVDHGKS) are G1. A GTP-binding site is contributed by 15-22 (GHVDHGKS). Ser22 provides a ligand contact to Mg(2+). The G2 stretch occupies residues 71 to 75 (GVTID). The interval 92-95 (DAPG) is G3. GTP contacts are provided by residues 92 to 96 (DAPGH) and 154 to 157 (NKMD). The interval 154-157 (NKMD) is G4. The G5 stretch occupies residues 195–197 (SAW).

This sequence belongs to the TRAFAC class translation factor GTPase superfamily. Classic translation factor GTPase family. EF-Tu/EF-1A subfamily.

Its subcellular location is the cytoplasm. The enzyme catalyses GTP + H2O = GDP + phosphate + H(+). Its function is as follows. GTP hydrolase that promotes the GTP-dependent binding of aminoacyl-tRNA to the A-site of ribosomes during protein biosynthesis. This is Elongation factor 1-alpha from Ignicoccus hospitalis (strain KIN4/I / DSM 18386 / JCM 14125).